An 88-amino-acid polypeptide reads, in one-letter code: Small ribosomal subunit protein uS17 (88 aa).

It belongs to the universal ribosomal protein uS17 family. As to quaternary structure, part of the 30S ribosomal subunit.

In terms of biological role, one of the primary rRNA binding proteins, it binds specifically to the 5'-end of 16S ribosomal RNA. The protein is Small ribosomal subunit protein uS17 of Hahella chejuensis (strain KCTC 2396).